The following is a 266-amino-acid chain: rRNA adenine N-6-methyltransferase (266 aa).

Residues His-14, Thr-16, Gly-41, Glu-62, Asp-87, and Asn-103 each contribute to the S-adenosyl-L-methionine site.

The protein belongs to the class I-like SAM-binding methyltransferase superfamily. rRNA adenine N(6)-methyltransferase family.

In terms of biological role, involved in erythromycin resistance. The protein is rRNA adenine N-6-methyltransferase (ermF) of Bacteroides fragilis.